Consider the following 92-residue polypeptide: Large ribosomal subunit protein bL27 (92 aa).

A propeptide spanning residues 1-9 (MIKANLQLF) is cleaved from the precursor.

It belongs to the bacterial ribosomal protein bL27 family. The N-terminus is cleaved by ribosomal processing cysteine protease Prp.

The polypeptide is Large ribosomal subunit protein bL27 (Acetivibrio thermocellus (strain ATCC 27405 / DSM 1237 / JCM 9322 / NBRC 103400 / NCIMB 10682 / NRRL B-4536 / VPI 7372) (Clostridium thermocellum)).